Consider the following 246-residue polypeptide: uncharacterized protein (246 aa).

Disordered regions lie at residues 9–125 (CSRV…GAMA) and 155–203 (QPVR…EEKA). A compositionally biased stretch (basic residues) spans 27–37 (GTRRQRQRPRQ). Composition is skewed to pro residues over residues 54-64 (PRPPTGPPARY) and 101-117 (EPRP…PPGS). Positions 161–176 (KLPKGKGRLRRPRQSR) are enriched in basic residues. Thr179 carries the phosphothreonine modification. Ser196, Ser210, and Ser220 each carry phosphoserine.

It is found in the cytoplasm. This is an uncharacterized protein from Mus musculus (Mouse).